Consider the following 701-residue polypeptide: Glycine--tRNA ligase beta subunit (701 aa).

Belongs to the class-II aminoacyl-tRNA synthetase family. Tetramer of two alpha and two beta subunits.

It localises to the cytoplasm. The enzyme catalyses tRNA(Gly) + glycine + ATP = glycyl-tRNA(Gly) + AMP + diphosphate. This is Glycine--tRNA ligase beta subunit from Thiobacillus denitrificans (strain ATCC 25259 / T1).